Consider the following 170-residue polypeptide: ATP synthase subunit b (170 aa).

Residues 11–31 (GLNTGDIIFQLIAMLILLALL) traverse the membrane as a helical segment.

This sequence belongs to the ATPase B chain family. F-type ATPases have 2 components, F(1) - the catalytic core - and F(0) - the membrane proton channel. F(1) has five subunits: alpha(3), beta(3), gamma(1), delta(1), epsilon(1). F(0) has three main subunits: a(1), b(2) and c(10-14). The alpha and beta chains form an alternating ring which encloses part of the gamma chain. F(1) is attached to F(0) by a central stalk formed by the gamma and epsilon chains, while a peripheral stalk is formed by the delta and b chains.

It localises to the cell membrane. Functionally, f(1)F(0) ATP synthase produces ATP from ADP in the presence of a proton or sodium gradient. F-type ATPases consist of two structural domains, F(1) containing the extramembraneous catalytic core and F(0) containing the membrane proton channel, linked together by a central stalk and a peripheral stalk. During catalysis, ATP synthesis in the catalytic domain of F(1) is coupled via a rotary mechanism of the central stalk subunits to proton translocation. Component of the F(0) channel, it forms part of the peripheral stalk, linking F(1) to F(0). The chain is ATP synthase subunit b from Bacillus pumilus (strain SAFR-032).